Here is a 608-residue protein sequence, read N- to C-terminus: Membrane protein insertase YidC (608 aa).

A helical transmembrane segment spans residues leucine 8 to proline 28. A disordered region spans residues proline 33–threonine 61. A run of 5 helical transmembrane segments spans residues methionine 378–tyrosine 398, leucine 448–leucine 468, leucine 482–proline 502, serine 506–valine 526, and isoleucine 542–valine 562.

It belongs to the OXA1/ALB3/YidC family. Type 1 subfamily. In terms of assembly, interacts with the Sec translocase complex via SecD. Specifically interacts with transmembrane segments of nascent integral membrane proteins during membrane integration.

The protein resides in the cell inner membrane. Its function is as follows. Required for the insertion and/or proper folding and/or complex formation of integral membrane proteins into the membrane. Involved in integration of membrane proteins that insert both dependently and independently of the Sec translocase complex, as well as at least some lipoproteins. Aids folding of multispanning membrane proteins. This chain is Membrane protein insertase YidC, found in Ruegeria sp. (strain TM1040) (Silicibacter sp.).